A 372-amino-acid chain; its full sequence is Tomoregulin-1 (372 aa).

The first 36 residues, M1 to A36, serve as a signal peptide directing secretion. The Extracellular segment spans residues S37–V322. N-linked (GlcNAc...) asparagine glycosylation occurs at N55. Residues A90–S137 enclose the Kazal-like 1 domain. 3 cysteine pairs are disulfide-bonded: C91–C121, C95–C114, and C103–C135. Residue N139 is glycosylated (N-linked (GlcNAc...) asparagine). A disordered region spans residues N139–K161. Residues V181–D229 enclose the Kazal-like 2 domain. Intrachain disulfides connect C182–C213, C186–C206, C195–C227, C267–C280, C275–C291, and C293–C302. Residues S263–E303 enclose the EGF-like domain. A helical transmembrane segment spans residues L323–I343. Residues T344–V372 are Cytoplasmic-facing. Residues N351–V372 form a disordered region. Residues Q358–V372 are compositionally biased toward polar residues.

Belongs to the tomoregulin family. In terms of assembly, may interact with ST14. Maily expressed in neurons. Expressed in brain, neurointermediate lobe, pars distalis, pancreas, ovary and testis.

It is found in the cell membrane. Its function is as follows. Neuron-specific restriction factor that prevents herpes simplex virus 1 (HHV-1) infection in the brain by blocking viral entry. Also able to restrict herpes simplex virus 2 (HHV-2) infection, although to a lesser extent. Acts by preventing the association between the viral glycoprotein D (gD) and its cell surface receptor NECTIN1, thereby inhibiting fusion of the virus and the cell membrane. Also able to prevent the association between the viral glycoprotein B (gB) and MYH9/NMMHC-IIA and MYH10/NMMHC-IIB receptors. This is Tomoregulin-1 from Mus musculus (Mouse).